The following is a 271-amino-acid chain: Ribosomal RNA small subunit methyltransferase A (271 aa).

6 residues coordinate S-adenosyl-L-methionine: His14, Leu16, Gly41, Glu63, Asp89, and Asn107.

The protein belongs to the class I-like SAM-binding methyltransferase superfamily. rRNA adenine N(6)-methyltransferase family. RsmA subfamily.

The protein localises to the cytoplasm. It carries out the reaction adenosine(1518)/adenosine(1519) in 16S rRNA + 4 S-adenosyl-L-methionine = N(6)-dimethyladenosine(1518)/N(6)-dimethyladenosine(1519) in 16S rRNA + 4 S-adenosyl-L-homocysteine + 4 H(+). Specifically dimethylates two adjacent adenosines (A1518 and A1519) in the loop of a conserved hairpin near the 3'-end of 16S rRNA in the 30S particle. May play a critical role in biogenesis of 30S subunits. The chain is Ribosomal RNA small subunit methyltransferase A from Lawsonia intracellularis (strain PHE/MN1-00).